The sequence spans 553 residues: uncharacterized protein (553 aa).

Positions 1 to 31 (MEDIMTSLLVATSRVVVTISLAYVPVKSAFA) are cleaved as a signal peptide. S207 acts as the Acyl-ester intermediate in catalysis. C275 and C292 are disulfide-bonded. D276, D279, V281, D283, and L285 together coordinate Ca(2+). Residues D444 and H482 each act as charge relay system in the active site. A disulfide bond links C528 and C550.

Belongs to the tannase family.

This is an uncharacterized protein from Agrobacterium fabrum (strain C58 / ATCC 33970) (Agrobacterium tumefaciens (strain C58)).